Reading from the N-terminus, the 1394-residue chain is DNA-directed RNA polymerase subunit beta'' (1394 aa).

The Zn(2+) site is built by cysteine 224, cysteine 295, cysteine 302, and cysteine 305.

Belongs to the RNA polymerase beta' chain family. RpoC2 subfamily. In terms of assembly, in plastids the minimal PEP RNA polymerase catalytic core is composed of four subunits: alpha, beta, beta', and beta''. When a (nuclear-encoded) sigma factor is associated with the core the holoenzyme is formed, which can initiate transcription. It depends on Zn(2+) as a cofactor.

The protein localises to the plastid. It is found in the chloroplast. The catalysed reaction is RNA(n) + a ribonucleoside 5'-triphosphate = RNA(n+1) + diphosphate. Its function is as follows. DNA-dependent RNA polymerase catalyzes the transcription of DNA into RNA using the four ribonucleoside triphosphates as substrates. The polypeptide is DNA-directed RNA polymerase subunit beta'' (Vitis vinifera (Grape)).